Here is a 219-residue protein sequence, read N- to C-terminus: Large ribosomal subunit protein uL3 (219 aa).

Q151 carries the post-translational modification N5-methylglutamine.

This sequence belongs to the universal ribosomal protein uL3 family. Part of the 50S ribosomal subunit. Forms a cluster with proteins L14 and L19. Post-translationally, methylated by PrmB.

One of the primary rRNA binding proteins, it binds directly near the 3'-end of the 23S rRNA, where it nucleates assembly of the 50S subunit. The polypeptide is Large ribosomal subunit protein uL3 (Blochmanniella floridana).